Reading from the N-terminus, the 86-residue chain is Small ribosomal subunit protein uS17 (86 aa).

It belongs to the universal ribosomal protein uS17 family. In terms of assembly, part of the 30S ribosomal subunit.

Functionally, one of the primary rRNA binding proteins, it binds specifically to the 5'-end of 16S ribosomal RNA. This chain is Small ribosomal subunit protein uS17, found in Exiguobacterium sp. (strain ATCC BAA-1283 / AT1b).